A 599-amino-acid chain; its full sequence is MLRTHDLGSLRSEHIGQTVTLAGWVGRRRDHGGVAFVDLRDASGVAQIVVREEEVFHGLRNEYVLQVTGTVSKRPEGNENPALGTGEIEVIAEDVTVLNTSDPLPFQIDEHVEVGEEARLKHRYLDLRRPGPSRNIRLRSEANRVARDLLHHEGYVEIETPTLTRSTPEGARDFLVPARLAPGSWYALPQSPQLFKQLLQVGGFEKYYQIARCYRDEDFRADRQPEFTQLDIEASFVDQDDVIRLGENIVKAVWKLIDVEIPTPIQRITYADAMARYGSDKPDLRFGQELTELTEFFKDTNFGVFKAPYVGAVVMPGGASQARRALDAWQEWAKQRGAKGLAYVLYKEDGELAGPVAKNLTDTERAGLADAVGAKPGDCIFFAAGEKTPSRALLGAARVEIGHRTGLIDPTDWAFCWVVDAPMFEPAAAAVASGDVAVGAGQWTAVHHAFTSPKPEFLDTFDKDPESALSYAYDIVCNGNEIGGGSIRIHQRDVQERVFELMGLDKEDAQTKFGFLLEGFKYGAPPHGGIAFGWDRVVSLLAGVESIRDVIAFPKSGGGFDPLTAAPAPITAQQRKEAGVDFKPEAVKPVEARKAEAVK.

Glu-169 lines the L-aspartate pocket. An aspartate region spans residues 193 to 196 (QLFK). Arg-215 is a binding site for L-aspartate. ATP is bound by residues 215–217 (RDE) and Gln-224. Position 447 (His-447) interacts with L-aspartate. Glu-481 lines the ATP pocket. Residue Arg-488 participates in L-aspartate binding. 533–536 (GWDR) provides a ligand contact to ATP.

It belongs to the class-II aminoacyl-tRNA synthetase family. Type 1 subfamily. Homodimer.

The protein localises to the cytoplasm. The catalysed reaction is tRNA(Asx) + L-aspartate + ATP = L-aspartyl-tRNA(Asx) + AMP + diphosphate. In terms of biological role, aspartyl-tRNA synthetase with relaxed tRNA specificity since it is able to aspartylate not only its cognate tRNA(Asp) but also tRNA(Asn). Reaction proceeds in two steps: L-aspartate is first activated by ATP to form Asp-AMP and then transferred to the acceptor end of tRNA(Asp/Asn). This is Aspartate--tRNA(Asp/Asn) ligase from Pseudarthrobacter chlorophenolicus (strain ATCC 700700 / DSM 12829 / CIP 107037 / JCM 12360 / KCTC 9906 / NCIMB 13794 / A6) (Arthrobacter chlorophenolicus).